Here is a 527-residue protein sequence, read N- to C-terminus: N-acetylglutamate synthase, mitochondrial (527 aa).

A mitochondrion-targeting transit peptide spans 1–18 (MATAWVATALRSAAAARR). The interval 14–91 (AAARRLRSPG…PLESPAPPAG (78 aa)) is disordered. Residues 19–369 (LRSPGGPGGS…CGTLFKNAER (351 aa)) form an amino-acid kinase domain (AAK) region. Over residues 54–63 (AHAEDAEGAK) the composition is skewed to basic and acidic residues. Pro residues predominate over residues 77–89 (TPLPTPLESPAPP). Positions 368-519 (ERMLRVRNLD…HAKGLPDSFC (152 aa)) constitute an N-acetyltransferase domain. Substrate is bound by residues Lys394, Lys437, and 467 to 472 (RSRVTN).

It belongs to the acetyltransferase family. In terms of assembly, homodimer. Homotetramer. Probably processed by mitochondrial processing peptidase (MPP). The long form has not yet been isolated. As to expression, highly expressed in the liver and small intestine. Weakly expressed in the kidney, spleen and testis.

The protein resides in the mitochondrion matrix. The enzyme catalyses L-glutamate + acetyl-CoA = N-acetyl-L-glutamate + CoA + H(+). It functions in the pathway amino-acid biosynthesis; L-arginine biosynthesis; N(2)-acetyl-L-ornithine from L-glutamate: step 1/4. With respect to regulation, increased by L-arginine. In terms of biological role, plays a role in the regulation of ureagenesis by producing the essential cofactor N-acetylglutamate (NAG), thus modulating carbamoylphosphate synthase I (CPS1) activity. The protein is N-acetylglutamate synthase, mitochondrial (Nags) of Mus musculus (Mouse).